A 113-amino-acid polypeptide reads, in one-letter code: MSTIQNLQSFDPFADATKGDDLLPAGTEDYIHIRIQQRNGRKTLTTVQGIADDYDKKKLVKAFKKKFACNGTVIEHPEYGEVIQLQGDQRKNICQFLLEVGIVKEEQLKVHGF.

N-acetylserine is present on Ser2. Residue Ser9 is modified to Phosphoserine.

The protein belongs to the SUI1 family.

Its function is as follows. Probably involved in translation. The protein is Eukaryotic translation initiation factor 1b (EIF1B) of Homo sapiens (Human).